The sequence spans 416 residues: S-adenosylmethionine synthase (416 aa).

His16 contributes to the ATP binding site. Asp18 contacts Mg(2+). K(+) is bound at residue Glu44. 2 residues coordinate L-methionine: Glu57 and Gln100. The tract at residues 100-110 (QSPDIAQGVTQ) is flexible loop. ATP-binding positions include 175–177 (DGK), 251–252 (KF), Asp260, 266–267 (RK), Ala283, and Lys287. Asp260 is a binding site for L-methionine. Lys291 lines the L-methionine pocket.

This sequence belongs to the AdoMet synthase family. In terms of assembly, homotetramer; dimer of dimers. The cofactor is Mg(2+). K(+) is required as a cofactor.

It localises to the cytoplasm. The enzyme catalyses L-methionine + ATP + H2O = S-adenosyl-L-methionine + phosphate + diphosphate. It functions in the pathway amino-acid biosynthesis; S-adenosyl-L-methionine biosynthesis; S-adenosyl-L-methionine from L-methionine: step 1/1. Functionally, catalyzes the formation of S-adenosylmethionine (AdoMet) from methionine and ATP. The overall synthetic reaction is composed of two sequential steps, AdoMet formation and the subsequent tripolyphosphate hydrolysis which occurs prior to release of AdoMet from the enzyme. The polypeptide is S-adenosylmethionine synthase (Crocosphaera subtropica (strain ATCC 51142 / BH68) (Cyanothece sp. (strain ATCC 51142))).